The chain runs to 1106 residues: Translation initiation factor IF-2 (1106 aa).

Low complexity-rich tracts occupy residues 57-72 (GKAA…PDAG) and 81-97 (APST…SAPP). Disordered regions lie at residues 57 to 434 (GKAA…QKVH) and 466 to 497 (PSKP…RQRR). Composition is skewed to pro residues over residues 113–123 (PAKPAPSAPPS) and 138–148 (PAKPAPSAPPS). The span at 172-199 (AKPVAKPASAPAPARPAQPLRPQASNRP) shows a compositional bias: low complexity. Pro residues-rich tracts occupy residues 200–214 (PQQP…PAAK) and 223–235 (TAPP…PGAP). Composition is skewed to low complexity over residues 251-292 (PNQQ…QQRR), 319-329 (PQGRQGGAPSR), and 395-405 (YRPAAAPGMAG). The segment covering 408–422 (RRPDWDDSARLDALR) has biased composition (basic and acidic residues). A compositionally biased stretch (basic residues) spans 482 to 497 (ALRRRKKETTRQRQRR). In terms of domain architecture, tr-type G spans 598 to 771 (RRPPVVTVMG…LLVTEVEDLK (174 aa)). The tract at residues 607-614 (GHVDHGKT) is G1. 607–614 (GHVDHGKT) lines the GTP pocket. Residues 632–636 (GITQH) are G2. The interval 657 to 660 (DTPG) is G3. Residues 657–661 (DTPGH) and 711–714 (NKVD) each bind GTP. Positions 711–714 (NKVD) are G4. Residues 747–749 (SAL) are G5.

This sequence belongs to the TRAFAC class translation factor GTPase superfamily. Classic translation factor GTPase family. IF-2 subfamily.

Its subcellular location is the cytoplasm. In terms of biological role, one of the essential components for the initiation of protein synthesis. Protects formylmethionyl-tRNA from spontaneous hydrolysis and promotes its binding to the 30S ribosomal subunits. Also involved in the hydrolysis of GTP during the formation of the 70S ribosomal complex. The polypeptide is Translation initiation factor IF-2 (Synechococcus sp. (strain RCC307)).